The chain runs to 365 residues: Phosphatidylcholine:ceramide cholinephosphotransferase 4 (365 aa).

The Cytoplasmic portion of the chain corresponds to 1-44 (MISYPFFSLSPPGLVPPPMAVPPVEMYSGSFWNRMRKPLPLRTQ). A helical transmembrane segment spans residues 45–65 (VIRFTVVFVIVSFILAVALQI). At 66–92 (THERMPDPKVTKPLPDLGFELLTKVPG) the chain is on the lumenal side. Residues 93–113 (MYVLADCCIGFLNILSVFTAF) form a helical membrane-spanning segment. Topologically, residues 114–165 (KLYLLHRHCVGSGEPELPCNIPGVSRFFLSVWLCKENCRIELRNVHTIAWIR) are cytoplasmic. Residues 166-186 (FITSYALLLLFRSVVIVMTSL) traverse the membrane as a helical segment. Residues 187 to 229 (PAPDDLCQDPPKIENPVKNVILTVLTAGGGSIHCGDLMYSGHT) lie on the Lumenal side of the membrane. His-228 is an active-site residue. A helical membrane pass occupies residues 230–250 (VILTLHLMFHWIYGAMVHWSF). Position 251 (Arg-251) is a topological domain, cytoplasmic. Residues 252–272 (PVVTVVAIFGYYCIVASRFHY) traverse the membrane as a helical segment. Catalysis depends on residues His-271 and Asp-275. At 273–275 (TDD) the chain is on the lumenal side. A helical membrane pass occupies residues 276-296 (VLVAIYLTIATFIAVGHNADG). Topologically, residues 297–365 (APWQLQLFIR…ALMFKCGAYV (69 aa)) are cytoplasmic.

Belongs to the sphingomyelin synthase family.

It is found in the golgi apparatus membrane. It catalyses the reaction an N-acylsphing-4-enine + a 1,2-diacyl-sn-glycero-3-phosphocholine = a sphingomyelin + a 1,2-diacyl-sn-glycerol. Functionally, bidirectional lipid cholinephosphotransferase capable of converting phosphatidylcholine (PC) and ceramide to sphingomyelin (SM) and diacylglycerol (DAG) and vice versa. Direction is dependent on the relative concentrations of DAG and ceramide as phosphocholine acceptors. Directly and specifically recognizes the choline head group on the substrate. Also requires two fatty chains on the choline-P donor molecule in order to be recognized efficiently as a substrate. Does not function strictly as a SM synthase. Essential for viability of the pathogenic bloodstream stage of this human protozoan parasite and, consequently, can be considered as potential drug target. The polypeptide is Phosphatidylcholine:ceramide cholinephosphotransferase 4 (Trypanosoma brucei brucei (strain 927/4 GUTat10.1)).